The chain runs to 273 residues: MRQDGRLPHEMRPVRITRHYNIHAEGSVLIEVGRTRVICTATLEDRVPPFLRGRGEGWITAEYGMLPRATGQRTAREAARGRQGGRTMEIQRLIGRALRSVIDLAALGERTLIIDCDVIQADGGTRTASITGAYVAMVDALAGLRAAGLIDRLPVKDYLAATSVGVVGGVPVLDLTYEEDSRAAVDLNLVMTGSGEVVEIQGTGEERPFTRRELEELLALAESGVRRLVALQREQLGPLGVEVGAVVTEASGIGHQEPGEGAGVSLAPGGGGL.

Residues Arg86 and 124–126 (GTR) each bind phosphate. The segment at 254-273 (GHQEPGEGAGVSLAPGGGGL) is disordered.

It belongs to the RNase PH family. In terms of assembly, homohexameric ring arranged as a trimer of dimers.

The catalysed reaction is tRNA(n+1) + phosphate = tRNA(n) + a ribonucleoside 5'-diphosphate. Functionally, phosphorolytic 3'-5' exoribonuclease that plays an important role in tRNA 3'-end maturation. Removes nucleotide residues following the 3'-CCA terminus of tRNAs; can also add nucleotides to the ends of RNA molecules by using nucleoside diphosphates as substrates, but this may not be physiologically important. Probably plays a role in initiation of 16S rRNA degradation (leading to ribosome degradation) during starvation. The polypeptide is Ribonuclease PH (Symbiobacterium thermophilum (strain DSM 24528 / JCM 14929 / IAM 14863 / T)).